Consider the following 188-residue polypeptide: Protein SSX3 (188 aa).

Residues 20–83 (KIQKAFDDIA…KRVTDFQGND (64 aa)) form the KRAB-related domain. A disordered region spans residues 113–162 (PKKPAEEGNVSKEVPEASGPQNDGKQLCPPGKPTTSEKINMISGPKRGEH). The segment covering 115–127 (KPAEEGNVSKEVP) has biased composition (basic and acidic residues). S123 is subject to Phosphoserine.

This sequence belongs to the SSX family. In terms of assembly, interacts with SSX2IP.

Its function is as follows. Could act as a modulator of transcription. This Homo sapiens (Human) protein is Protein SSX3 (SSX3).